The primary structure comprises 416 residues: Inhibitor of growth protein 3 (416 aa).

Disordered regions lie at residues 126-165 (LDTPSQPVNNHHVHSHSSGEKRKHIPSSHHSTTDHVPEKK), 177-198 (SDASKENTAGCRTNLSSSSTNN), and 283-319 (QTLTSSATTDSRSGRKSKSNNKSASQQSSSSSSSSSL). The span at 136–152 (HHVHSHSSGEKRKHIPS) shows a compositional bias: basic residues. Positions 156–165 (STTDHVPEKK) are enriched in basic and acidic residues. Residues 177 to 187 (SDASKENTAGC) show a composition bias toward polar residues. Composition is skewed to low complexity over residues 189–198 (TNLSSSSTNN), 283–293 (QTLTSSATTDS), and 302–319 (NNKSASQQSSSSSSSSSL). A PHD-type zinc finger spans residues 358–407 (PRYCICNQVSYGEMVGCDNQDCPIEWFHYGCVGLSEAPKGKWYCPQCTAA). Residues Cys361, Cys363, Cys374, Cys379, His385, Cys388, Cys401, and Cys404 each contribute to the Zn(2+) site.

Belongs to the ING family. As to quaternary structure, interacts with H3K4me3 and to a lesser extent with H3K4me2. Component of the NuA4 histone acetyltransferase complex.

It localises to the nucleus. Its function is as follows. Component of the NuA4 histone acetyltransferase (HAT) complex which is involved in transcriptional activation of select genes principally by acetylation of nucleosomal histone H4 and H2A. This modification may both alter nucleosome - DNA interactions and promote interaction of the modified histones with other proteins which positively regulate transcription. NuA4 may also play a direct role in DNA repair when directly recruited to sites of DNA damage. The polypeptide is Inhibitor of growth protein 3 (ing3) (Xenopus laevis (African clawed frog)).